The chain runs to 442 residues: Cyclic AMP receptor-like protein B (442 aa).

Over 1 to 16 the chain is Extracellular; sequence MGGDIHLCSMILGKNH. Residues 17-37 traverse the membrane as a helical segment; sequence LIFLYFANLFGSTLSFLATII. Residues 38 to 219 lie on the Cytoplasmic side of the membrane; that stretch reads TIVFYLVKKY…PKKIDTLIFY (182 aa). Positions 83–166 are disordered; the sequence is YSSTPISIQN…LSSSDKNNTI (84 aa). Low complexity predominate over residues 91-103; sequence QNNNNKNNNLPKQ. The span at 112-122 shows a compositional bias: polar residues; sequence INKNHNNYCNY. Positions 123–144 are enriched in low complexity; that stretch reads STSATSSSSSSSSFSSTNSGSS. A compositionally biased stretch (polar residues) spans 145–166; that stretch reads YEYQQPQKNQQTLSSSDKNNTI. The helical transmembrane segment at 220–240 threads the bilayer; the sequence is LSISDFIAVSGIIIEQLIIIF. The Extracellular portion of the chain corresponds to 241 to 255; it reads NKEISKSIGFCIGER. Residues 256–276 form a helical membrane-spanning segment; it reads VSIHFGLLATLFWSNCIAYYL. Topologically, residues 277-289 are cytoplasmic; the sequence is LRETYELKPYNIR. The chain crosses the membrane as a helical span at residues 290 to 310; the sequence is FVYFHIVCWGMALIGVASLFF. Topologically, residues 311–334 are extracellular; the sequence is SKIITVSNIDQGGSWCSVSSSYQL. The helical transmembrane segment at 335–355 threads the bilayer; that stretch reads YFWVIPLFVSFTWNLICYCLI. At 356–382 the chain is on the cytoplasmic side; that stretch reads YRKFNKIIGIYGIQSVQIKTIIIRKLS. The chain crosses the membrane as a helical span at residues 383–403; sequence FYLLAFLITWVWDVINNSIFL. Over 404–410 the chain is Extracellular; the sequence is YEGKCPP. Residues 411–431 traverse the membrane as a helical segment; the sequence is FALWILQEFFSSGYGFFNSLA. Residues 432–442 lie on the Cytoplasmic side of the membrane; sequence YAVTTRFYSRK.

It belongs to the G-protein coupled receptor 5 family.

Its subcellular location is the membrane. Functionally, receptor for cAMP. This Dictyostelium discoideum (Social amoeba) protein is Cyclic AMP receptor-like protein B (crlB).